Consider the following 350-residue polypeptide: Transcription factor MYB102 (350 aa).

2 HTH myb-type domains span residues 9–65 (KNGL…RPDI) and 66–116 (KRGR…RKKL). 2 consecutive DNA-binding regions (H-T-H motif) follow at residues 37–61 (WRTLPKNAGLQRCGKSCRLRWTNYL) and 89–112 (WSAIAARLPGRTDNEIKNFWNTHI).

Expressed in rosette leaves, cauline leaves and flowers.

Its subcellular location is the nucleus. Probable transcription factor that may function in osmotic stress and wounding signaling pathways. Contributes to basal resistance against the herbivore Pieris rapae (white cabbage butterfly) feeding. The sequence is that of Transcription factor MYB102 from Arabidopsis thaliana (Mouse-ear cress).